The sequence spans 377 residues: Erythronate-4-phosphate dehydrogenase (377 aa).

Residues Ser45 and Thr67 each contribute to the substrate site. NAD(+) contacts are provided by residues Asp147, 210-212 (ASR), and Asp236. Residue Arg212 is part of the active site. Glu241 is a catalytic residue. The active-site Proton donor is the His258. Position 261 (Gly261) interacts with NAD(+). Residue Tyr262 coordinates substrate.

This sequence belongs to the D-isomer specific 2-hydroxyacid dehydrogenase family. PdxB subfamily. As to quaternary structure, homodimer.

It is found in the cytoplasm. The catalysed reaction is 4-phospho-D-erythronate + NAD(+) = (R)-3-hydroxy-2-oxo-4-phosphooxybutanoate + NADH + H(+). The protein operates within cofactor biosynthesis; pyridoxine 5'-phosphate biosynthesis; pyridoxine 5'-phosphate from D-erythrose 4-phosphate: step 2/5. Its function is as follows. Catalyzes the oxidation of erythronate-4-phosphate to 3-hydroxy-2-oxo-4-phosphonooxybutanoate. The sequence is that of Erythronate-4-phosphate dehydrogenase from Aeromonas salmonicida (strain A449).